We begin with the raw amino-acid sequence, 202 residues long: Small ribosomal subunit protein uS4c (202 aa).

An S4 RNA-binding domain is found at 90–154 (MRLDNILFRL…SQSIITKNLN (65 aa)).

It belongs to the universal ribosomal protein uS4 family. Part of the 30S ribosomal subunit. Contacts protein S5. The interaction surface between S4 and S5 is involved in control of translational fidelity.

It localises to the plastid. It is found in the chloroplast. Its function is as follows. One of the primary rRNA binding proteins, it binds directly to 16S rRNA where it nucleates assembly of the body of the 30S subunit. With S5 and S12 plays an important role in translational accuracy. This chain is Small ribosomal subunit protein uS4c (rps4), found in Monoclea forsteri (Liverwort).